A 423-amino-acid polypeptide reads, in one-letter code: Serine hydroxymethyltransferase (423 aa).

(6S)-5,6,7,8-tetrahydrofolate is bound by residues L125 and 129–131; that span reads GHL. N6-(pyridoxal phosphate)lysine is present on K234. E249 provides a ligand contact to (6S)-5,6,7,8-tetrahydrofolate.

Belongs to the SHMT family. In terms of assembly, homodimer. The cofactor is pyridoxal 5'-phosphate.

Its subcellular location is the cytoplasm. It carries out the reaction (6R)-5,10-methylene-5,6,7,8-tetrahydrofolate + glycine + H2O = (6S)-5,6,7,8-tetrahydrofolate + L-serine. Its pathway is one-carbon metabolism; tetrahydrofolate interconversion. The protein operates within amino-acid biosynthesis; glycine biosynthesis; glycine from L-serine: step 1/1. Functionally, catalyzes the reversible interconversion of serine and glycine with tetrahydrofolate (THF) serving as the one-carbon carrier. This reaction serves as the major source of one-carbon groups required for the biosynthesis of purines, thymidylate, methionine, and other important biomolecules. Also exhibits THF-independent aldolase activity toward beta-hydroxyamino acids, producing glycine and aldehydes, via a retro-aldol mechanism. The chain is Serine hydroxymethyltransferase from Thermobifida fusca (strain YX).